The sequence spans 101 residues: MQLYTYLYLLVPLVTFHLILGTGTLDHGGALTERRSTDAIALKPEPVLLQKSSARSTDDNGNDRLTQMKRILKKRGNKARGEEEVAKMAAELAREDAVNGK.

A signal peptide spans 1–21; it reads MQLYTYLYLLVPLVTFHLILG. The propeptide occupies 22–80; sequence TGTLDHGGALTERRSTDAIALKPEPVLLQKSSARSTDDNGNDRLTQMKRILKKRGNKAR. Glu83, Glu84, Glu91, and Glu95 each carry 4-carboxyglutamate. A divalent metal cation is bound by residues Glu91 and Glu95. The residue at position 99 (Asn99) is an Asparagine amide.

Belongs to the conotoxin B superfamily. Ca(2+) is required as a cofactor. Mg(2+) serves as cofactor. In terms of tissue distribution, expressed by the venom duct.

It is found in the secreted. Conantokins inhibit N-methyl-D-aspartate (NMDA) receptors. This toxin is far less potent as an anticonvulsant compound than conantokin-R. It induces sleep-like symptoms in mice. The polypeptide is Conantokin-L (Conus lynceus (Lynceus cone)).